The chain runs to 314 residues: Ribosomal RNA small subunit methyltransferase H (314 aa).

Residues 35–37, D55, F79, D101, and Q108 contribute to the S-adenosyl-L-methionine site; that span reads GGH.

It belongs to the methyltransferase superfamily. RsmH family.

It localises to the cytoplasm. It catalyses the reaction cytidine(1402) in 16S rRNA + S-adenosyl-L-methionine = N(4)-methylcytidine(1402) in 16S rRNA + S-adenosyl-L-homocysteine + H(+). Specifically methylates the N4 position of cytidine in position 1402 (C1402) of 16S rRNA. The sequence is that of Ribosomal RNA small subunit methyltransferase H from Pectobacterium carotovorum subsp. carotovorum (strain PC1).